Reading from the N-terminus, the 136-residue chain is Nucleoside diphosphate kinase (136 aa).

6 residues coordinate ATP: K10, F58, R86, T92, R104, and N114. H117 functions as the Pros-phosphohistidine intermediate in the catalytic mechanism.

It belongs to the NDK family. In terms of assembly, homotetramer. It depends on Mg(2+) as a cofactor.

Its subcellular location is the cytoplasm. It catalyses the reaction a 2'-deoxyribonucleoside 5'-diphosphate + ATP = a 2'-deoxyribonucleoside 5'-triphosphate + ADP. The enzyme catalyses a ribonucleoside 5'-diphosphate + ATP = a ribonucleoside 5'-triphosphate + ADP. In terms of biological role, major role in the synthesis of nucleoside triphosphates other than ATP. The ATP gamma phosphate is transferred to the NDP beta phosphate via a ping-pong mechanism, using a phosphorylated active-site intermediate. This chain is Nucleoside diphosphate kinase, found in Corynebacterium efficiens (strain DSM 44549 / YS-314 / AJ 12310 / JCM 11189 / NBRC 100395).